Reading from the N-terminus, the 424-residue chain is Tyrosine--tRNA ligase (424 aa).

Tyr-37 lines the L-tyrosine pocket. Residues 42-51 carry the 'HIGH' region motif; it reads PTADSLHIGS. L-tyrosine contacts are provided by Tyr-174 and Gln-178. The 'KMSKS' region motif lies at 234-238; the sequence is KFGKT. Residue Lys-237 coordinates ATP. The 66-residue stretch at 357 to 422 folds into the S4 RNA-binding domain; it reads SGLIDALAAG…RGKKLYALVD (66 aa).

This sequence belongs to the class-I aminoacyl-tRNA synthetase family. TyrS type 1 subfamily. Homodimer.

It localises to the cytoplasm. It carries out the reaction tRNA(Tyr) + L-tyrosine + ATP = L-tyrosyl-tRNA(Tyr) + AMP + diphosphate + H(+). Functionally, catalyzes the attachment of tyrosine to tRNA(Tyr) in a two-step reaction: tyrosine is first activated by ATP to form Tyr-AMP and then transferred to the acceptor end of tRNA(Tyr). The sequence is that of Tyrosine--tRNA ligase from Chromobacterium violaceum (strain ATCC 12472 / DSM 30191 / JCM 1249 / CCUG 213 / NBRC 12614 / NCIMB 9131 / NCTC 9757 / MK).